Consider the following 194-residue polypeptide: MGRNKEFDTALVLHRAIEVFGEYGYEGTSLQDLLSHLGIARQSLYDTYGTKRDLFLSAVKSYLEGKNAAVMERLEAPGSVKEAIRDIFQEGVNALRDPERAKACYIINSAIEQIPHDPELARYFERQSKQLEDAFYHGLLRAKDQGELNGEDTDISALARYLNQSRLSLTFIAKVTADMDRLQDHVDVSLSVLD.

The 61-residue stretch at 6-66 (EFDTALVLHR…SAVKSYLEGK (61 aa)) folds into the HTH tetR-type domain. Residues 29–48 (SLQDLLSHLGIARQSLYDTY) constitute a DNA-binding region (H-T-H motif).

This is an uncharacterized protein from Bacillus subtilis (strain 168).